Consider the following 757-residue polypeptide: Cellulose synthase-like protein B2 (757 aa).

2 consecutive transmembrane segments (helical) span residues 24-44 (AVDL…ILYM) and 48-68 (GIIW…WLLS). Residues Asp136 and Asp461 contribute to the active site. Helical transmembrane passes span 533-555 (AYLC…LPAY), 568-588 (LCLG…LWEF), 607-627 (IVAT…LLGL), 672-692 (FLPG…VFVG), 704-724 (GSGL…FPFL), and 735-755 (IPLS…VFSV).

It belongs to the glycosyltransferase 2 family. Plant cellulose synthase-like B subfamily. Expressed in young seedlings, primarily in the root vascular tissue.

It localises to the golgi apparatus membrane. Thought to be a Golgi-localized beta-glycan synthase that polymerize the backbones of noncellulosic polysaccharides (hemicelluloses) of plant cell wall. In Arabidopsis thaliana (Mouse-ear cress), this protein is Cellulose synthase-like protein B2 (CSLB2).